The primary structure comprises 314 residues: 4-hydroxy-3-methylbut-2-enyl diphosphate reductase (314 aa).

Cys12 contacts [4Fe-4S] cluster. 2 residues coordinate (2E)-4-hydroxy-3-methylbut-2-enyl diphosphate: His41 and His74. Residues His41 and His74 each contribute to the dimethylallyl diphosphate site. Residues His41 and His74 each coordinate isopentenyl diphosphate. [4Fe-4S] cluster is bound at residue Cys96. His124 is a (2E)-4-hydroxy-3-methylbut-2-enyl diphosphate binding site. Residue His124 coordinates dimethylallyl diphosphate. An isopentenyl diphosphate-binding site is contributed by His124. Glu126 acts as the Proton donor in catalysis. (2E)-4-hydroxy-3-methylbut-2-enyl diphosphate is bound at residue Thr168. Residue Cys198 coordinates [4Fe-4S] cluster. (2E)-4-hydroxy-3-methylbut-2-enyl diphosphate contacts are provided by Ser226, Ser227, Asn228, and Ser270. Ser226, Ser227, Asn228, and Ser270 together coordinate dimethylallyl diphosphate. Positions 226, 227, 228, and 270 each coordinate isopentenyl diphosphate.

This sequence belongs to the IspH family. Requires [4Fe-4S] cluster as cofactor.

It catalyses the reaction isopentenyl diphosphate + 2 oxidized [2Fe-2S]-[ferredoxin] + H2O = (2E)-4-hydroxy-3-methylbut-2-enyl diphosphate + 2 reduced [2Fe-2S]-[ferredoxin] + 2 H(+). The catalysed reaction is dimethylallyl diphosphate + 2 oxidized [2Fe-2S]-[ferredoxin] + H2O = (2E)-4-hydroxy-3-methylbut-2-enyl diphosphate + 2 reduced [2Fe-2S]-[ferredoxin] + 2 H(+). It functions in the pathway isoprenoid biosynthesis; dimethylallyl diphosphate biosynthesis; dimethylallyl diphosphate from (2E)-4-hydroxy-3-methylbutenyl diphosphate: step 1/1. The protein operates within isoprenoid biosynthesis; isopentenyl diphosphate biosynthesis via DXP pathway; isopentenyl diphosphate from 1-deoxy-D-xylulose 5-phosphate: step 6/6. Catalyzes the conversion of 1-hydroxy-2-methyl-2-(E)-butenyl 4-diphosphate (HMBPP) into a mixture of isopentenyl diphosphate (IPP) and dimethylallyl diphosphate (DMAPP). Acts in the terminal step of the DOXP/MEP pathway for isoprenoid precursor biosynthesis. The chain is 4-hydroxy-3-methylbut-2-enyl diphosphate reductase from Pseudomonas aeruginosa (strain LESB58).